We begin with the raw amino-acid sequence, 34 residues long: Potassium channel toxin alpha-KTx 6 hetlaxin (34 aa).

4 disulfides stabilise this stretch: Cys-3-Cys-24, Cys-9-Cys-29, Cys-13-Cys-31, and Cys-19-Cys-34. Cys-34 is subject to Cysteine amide.

Contains 4 disulfide bonds. As to expression, expressed by the venom gland.

The protein resides in the secreted. Functionally, binds to voltage-gated potassium channels Kv1.3/KCNA3 (IC(50)=0.48 uM) and Kv1.1/KCNA1 (IC(50)=6.7 uM) and inhibits channel activity. The chain is Potassium channel toxin alpha-KTx 6 hetlaxin from Heterometrus laoticus (Thai giant scorpion).